The chain runs to 319 residues: Quinolinate synthase (319 aa).

The iminosuccinate site is built by His-34 and Ser-51. Residue Cys-96 coordinates [4Fe-4S] cluster. Residues 122 to 124 (YIN) and Ser-139 contribute to the iminosuccinate site. [4Fe-4S] cluster is bound at residue Cys-182. Iminosuccinate-binding positions include 208 to 210 (HPE) and Thr-225. A [4Fe-4S] cluster-binding site is contributed by Cys-276.

The protein belongs to the quinolinate synthase family. Type 2 subfamily. Requires [4Fe-4S] cluster as cofactor.

The protein localises to the cytoplasm. The catalysed reaction is iminosuccinate + dihydroxyacetone phosphate = quinolinate + phosphate + 2 H2O + H(+). The protein operates within cofactor biosynthesis; NAD(+) biosynthesis; quinolinate from iminoaspartate: step 1/1. In terms of biological role, catalyzes the condensation of iminoaspartate with dihydroxyacetone phosphate to form quinolinate. The protein is Quinolinate synthase of Thermosynechococcus vestitus (strain NIES-2133 / IAM M-273 / BP-1).